A 643-amino-acid polypeptide reads, in one-letter code: MRLSELSHPNQLHGLTIAQLEDIACQIRERHLQVVSTSGGHLGPGLGVVELTIALYQTLDLDVDKVVWDVGHQAYPHKLITGRYENFNTLRQKGGVAGYLKRSESTFDHFGAGHASTSISAALGMAFARDRLGLNHKCVAVIGDGALTGGMALEAINHAGHLPNTPFLVVLNDNDMSISPPVGALSTYLNRMRHSAPVQFISDSVQESVKNLPFIGGEIPPEIKSLTGSVKRLAVPKVGAVFEELGFTYMGPIDGHDISRMIRTFQAAHRVGGPVLVHVATTKGKGYPYAEADQVGYHAQSAFDLTTGKSIPSKSPKPPSYSKVFGQTLVKICEQNNKVIGITAAMATGTGLDLLQKAIPNQYVDVGIAEQHAVTLAAGMACDGLRPVVAIYSTFLQRAYDQLIHDVGIQKLPVTFVLDRAGIVGADGPTHQGQYDISYLRSVPNFTVMAPKDEAELQRMLVTCLENDGPCALRIPRGSGEGVTLMEEGWEPLKIGRGEILEDGDDLLILAYGSMVTPAVQTAELLKQAGISSTVVNARFLRPLDQALIHPLARRIGKVVTIEEGALGGGFGSAVVESFSDQDLLVPTFRLGIPDKLVDHASPQQSKESLGLTPSQMSKSIMKRYGWDTSDSLFLSNSNTSSA.

Thiamine diphosphate is bound by residues His-72 and 113 to 115 (GHA). Residue Asp-144 participates in Mg(2+) binding. Thiamine diphosphate contacts are provided by residues 145–146 (GA), Asn-174, Tyr-287, and Glu-370. Mg(2+) is bound at residue Asn-174.

This sequence belongs to the transketolase family. DXPS subfamily. As to quaternary structure, homodimer. It depends on Mg(2+) as a cofactor. Thiamine diphosphate serves as cofactor.

It carries out the reaction D-glyceraldehyde 3-phosphate + pyruvate + H(+) = 1-deoxy-D-xylulose 5-phosphate + CO2. The protein operates within metabolic intermediate biosynthesis; 1-deoxy-D-xylulose 5-phosphate biosynthesis; 1-deoxy-D-xylulose 5-phosphate from D-glyceraldehyde 3-phosphate and pyruvate: step 1/1. In terms of biological role, catalyzes the acyloin condensation reaction between C atoms 2 and 3 of pyruvate and glyceraldehyde 3-phosphate to yield 1-deoxy-D-xylulose-5-phosphate (DXP). The protein is 1-deoxy-D-xylulose-5-phosphate synthase of Prochlorococcus marinus (strain MIT 9211).